We begin with the raw amino-acid sequence, 500 residues long: MSLKFTNTLSKKKEDFISINPNQVKIYCCGVTVYDLCHLGHARSYLNWDVLRRFLIWKGFEVKFVQNFTDIDDKIINRANKEGCSTDELSERNIDEFHKDMDTLSILRPTSMPRATKCLHQIINFIEELEQKKVAYSSNGDVYFSVDKHKNYGKLSGREIEDQIDNAAGRLKTNQKESKKNSLDFALWKKSNSGEVSYSSPWGNGRPGWHIECSAMVKQELGESIDIHLGGSDLIFPHHENEIAQSEACNGKELAKYWLHNGMVNVGGEKMSKSLGNFTTIRSLLEEDISPMTLRFFVLQTNYRKPLDFTEEALKAASKGWERLNNCLSFGYIYKIKDQSKNEIFLDKPIKKSANTKLDKNSFKLLSDFEKYMDDDLNTSGALSILFELSQPIRKIINFLKEKDINEVDQDELNQVFNKWELLSELAGVLGLKVNLNQEKPKNNPELDTNKIEELIKNRSLAKANKDFLLADKIRADLKNIGIDLIDKPKGVTEWKQLSD.

Residue C29 participates in Zn(2+) binding. Residues 31-41 (VTVYDLCHLGH) carry the 'HIGH' region motif. C213, H238, and E242 together coordinate Zn(2+). The 'KMSKS' region motif lies at 270–274 (KMSKS). K273 lines the ATP pocket.

This sequence belongs to the class-I aminoacyl-tRNA synthetase family. In terms of assembly, monomer. Requires Zn(2+) as cofactor.

The protein localises to the cytoplasm. It carries out the reaction tRNA(Cys) + L-cysteine + ATP = L-cysteinyl-tRNA(Cys) + AMP + diphosphate. This chain is Cysteine--tRNA ligase, found in Prochlorococcus marinus (strain NATL2A).